Reading from the N-terminus, the 302-residue chain is Phosphoribosylaminoimidazole-succinocarboxamide synthase (302 aa).

It belongs to the SAICAR synthetase family.

The enzyme catalyses 5-amino-1-(5-phospho-D-ribosyl)imidazole-4-carboxylate + L-aspartate + ATP = (2S)-2-[5-amino-1-(5-phospho-beta-D-ribosyl)imidazole-4-carboxamido]succinate + ADP + phosphate + 2 H(+). It participates in purine metabolism; IMP biosynthesis via de novo pathway; 5-amino-1-(5-phospho-D-ribosyl)imidazole-4-carboxamide from 5-amino-1-(5-phospho-D-ribosyl)imidazole-4-carboxylate: step 1/2. This is Phosphoribosylaminoimidazole-succinocarboxamide synthase from Cupriavidus pinatubonensis (strain JMP 134 / LMG 1197) (Cupriavidus necator (strain JMP 134)).